A 92-amino-acid polypeptide reads, in one-letter code: Toxin RelE3 (92 aa).

The protein belongs to the RelE toxin family.

In terms of biological role, toxic component of a type II toxin-antitoxin (TA) system. Its toxic effect is neutralized by coexpression with cognate antitoxin RelB3 but no other ParD or RelB antitoxin. This is Toxin RelE3 (relE3) from Caulobacter vibrioides (strain ATCC 19089 / CIP 103742 / CB 15) (Caulobacter crescentus).